We begin with the raw amino-acid sequence, 325 residues long: Ribose-phosphate pyrophosphokinase 4 (325 aa).

Residues aspartate 145 and histidine 147 each coordinate Mg(2+). The segment at 228 to 243 is binding of phosphoribosylpyrophosphate; the sequence is GRHVVIVDDLVQSGGT.

The protein belongs to the ribose-phosphate pyrophosphokinase family. The cofactor is Mg(2+).

The catalysed reaction is D-ribose 5-phosphate + ATP = 5-phospho-alpha-D-ribose 1-diphosphate + AMP + H(+). The sequence is that of Ribose-phosphate pyrophosphokinase 4 from Oryza sativa subsp. japonica (Rice).